We begin with the raw amino-acid sequence, 443 residues long: ATP-dependent protease ATPase subunit HslU (443 aa).

Residues Ile-18, Gly-60 to Glu-65, Asp-256, Glu-321, and Arg-393 contribute to the ATP site.

This sequence belongs to the ClpX chaperone family. HslU subfamily. As to quaternary structure, a double ring-shaped homohexamer of HslV is capped on each side by a ring-shaped HslU homohexamer. The assembly of the HslU/HslV complex is dependent on binding of ATP.

The protein localises to the cytoplasm. In terms of biological role, ATPase subunit of a proteasome-like degradation complex; this subunit has chaperone activity. The binding of ATP and its subsequent hydrolysis by HslU are essential for unfolding of protein substrates subsequently hydrolyzed by HslV. HslU recognizes the N-terminal part of its protein substrates and unfolds these before they are guided to HslV for hydrolysis. This chain is ATP-dependent protease ATPase subunit HslU, found in Enterobacter sp. (strain 638).